Consider the following 141-residue polypeptide: Hemoglobin subunit alpha (141 aa).

The Globin domain occupies Val1–Arg141. Ser3 carries the phosphoserine modification. An N6-succinyllysine mark is found at Lys7 and Lys11. Lys16 is subject to N6-acetyllysine; alternate. Position 16 is an N6-succinyllysine; alternate (Lys16). Tyr24 carries the post-translational modification Phosphotyrosine. Lys40 carries the post-translational modification N6-succinyllysine. At Ser49 the chain carries Phosphoserine. Residue His58 coordinates O2. His87 is a binding site for heme b. Position 102 is a phosphoserine (Ser102). The residue at position 108 (Thr108) is a Phosphothreonine. Residue Ser124 is modified to Phosphoserine. Phosphothreonine occurs at positions 134 and 137. At Ser138 the chain carries Phosphoserine.

Belongs to the globin family. Heterotetramer of two alpha chains and two beta chains. In terms of tissue distribution, red blood cells.

In terms of biological role, involved in oxygen transport from the lung to the various peripheral tissues. Functionally, hemopressin acts as an antagonist peptide of the cannabinoid receptor CNR1. Hemopressin-binding efficiently blocks cannabinoid receptor CNR1 and subsequent signaling. This is Hemoglobin subunit alpha (HBA) from Lama glama (Llama).